The primary structure comprises 219 residues: Small ribosomal subunit protein uS2m (219 aa).

Belongs to the universal ribosomal protein uS2 family. Component of the mitochondrial ribosome small subunit.

The protein resides in the mitochondrion. The sequence is that of Small ribosomal subunit protein uS2m (RPS2) from Arabidopsis thaliana (Mouse-ear cress).